Reading from the N-terminus, the 313-residue chain is 18S rRNA aminocarboxypropyltransferase (313 aa).

The segment at 1-30 is disordered; that stretch reads MGKGKNKMHEPKNGRPQRGANGHSSRQNHR. S-adenosyl-L-methionine is bound by residues Ser62, Val110, Leu133, and Trp148. Over residues 215-228 the composition is skewed to basic and acidic residues; sequence KETQERKSRAKEED. The disordered stretch occupies residues 215 to 313; it reads KETQERKSRA…SYDPLGNLIR (99 aa). Positions 237 to 246 are enriched in polar residues; the sequence is RRGNGSQSDT. The segment covering 247 to 257 has biased composition (acidic residues); the sequence is SESEENSEQSD. Residues Ser286 and Ser289 each carry the phosphoserine modification.

This sequence belongs to the TDD superfamily. TSR3 family.

It is found in the cytoplasm. The protein localises to the nucleus. It catalyses the reaction an N(1)-methylpseudouridine in rRNA + S-adenosyl-L-methionine = N(1)-methyl-N(3)-[(3S)-3-amino-3-carboxypropyl]pseudouridine in rRNA + S-methyl-5'-thioadenosine + H(+). The enzyme catalyses N(1)-methylpseudouridine(1191) in yeast 18S rRNA + S-adenosyl-L-methionine = N(1)-methyl-N(3)-[(3S)-3-amino-3-carboxypropyl]pseudouridine(1191) in yeast 18S rRNA + S-methyl-5'-thioadenosine + H(+). Functionally, aminocarboxypropyltransferase that catalyzes the aminocarboxypropyl transfer on pseudouridine at position 1191 (Psi1191) in 18S rRNA. It constitutes the last step in biosynthesis of the hypermodified N1-methyl-N3-(3-amino-3-carboxypropyl) pseudouridine (m1acp3-Psi) conserved in eukaryotic 18S rRNA. Required for processing 35S pre-rRNA at site D. The sequence is that of 18S rRNA aminocarboxypropyltransferase from Saccharomyces cerevisiae (strain ATCC 204508 / S288c) (Baker's yeast).